We begin with the raw amino-acid sequence, 224 residues long: Polysialic acid transport ATP-binding protein KpsT (224 aa).

The 222-residue stretch at 2–223 (IKIENLTKSY…EYKMYQDLDI (222 aa)) folds into the ABC transporter domain. 38-45 (GRNGAGKS) lines the ATP pocket.

The protein belongs to the ABC transporter superfamily.

The protein resides in the cell inner membrane. Functionally, putative ATP-binding protein, and an energy coupling component for the transport of polysialic acid across the cytoplasmic membrane. The chain is Polysialic acid transport ATP-binding protein KpsT (kpsT) from Escherichia coli.